Here is a 236-residue protein sequence, read N- to C-terminus: Baculoviral IAP repeat-containing protein 8 (236 aa).

The BIR repeat unit spans residues 7-70; it reads RLITFGTWMY…KWYPGCKYLL (64 aa). 4 residues coordinate Zn(2+): C39, C42, H59, and C66. An RING-type zinc finger spans residues 189–224; sequence CKICMDRHIAVVFIPCGHLVTCKQCAEAVDRCPMCS.

The protein belongs to the IAP family. In terms of assembly, binds to caspase-9.

The protein localises to the cytoplasm. Functionally, protects against apoptosis mediated by BAX. The sequence is that of Baculoviral IAP repeat-containing protein 8 (BIRC8) from Pan troglodytes (Chimpanzee).